A 1067-amino-acid polypeptide reads, in one-letter code: Cadmium/zinc-transporting ATPase HMA2 (1067 aa).

One can recognise an HMA domain in the interval 9-75 (QKSYFDVLGI…ALNQARLEAS (67 aa)). The next 8 helical transmembrane spans lie at 94–114 (YVLL…WHPL), 117–137 (FALV…IAAI), 140–160 (LTLD…ALKD), 162–182 (SEAG…TRAS), 313–333 (YTPA…IAKA), 342–362 (LALV…TPIA), 649–669 (IIVN…LAFA), and 673–693 (LIWA…MYSM). Disordered regions lie at residues 711-739 (HHGS…HHCS), 760-790 (HDHH…SHGH), and 960-996 (NDTH…GHHP). Residues 724 to 735 (HGSHAKKNHGVS) are compositionally biased toward basic residues. Basic and acidic residues-rich tracts occupy residues 760-774 (HDHH…EPAH) and 975-996 (SSDH…GHHP).

This sequence belongs to the cation transport ATPase (P-type) (TC 3.A.3) family. Type IB subfamily. In terms of tissue distribution, in roots, localizes at the pericycle cells. In nodes, localizes in the phloem parenchyma and companion cells of both enlarged and diffuse vascular bundles.

The protein resides in the cell membrane. The catalysed reaction is Zn(2+)(in) + ATP + H2O = Zn(2+)(out) + ADP + phosphate + H(+). It catalyses the reaction Cd(2+)(in) + ATP + H2O = Cd(2+)(out) + ADP + phosphate + H(+). Functionally, zinc/cadmium transporter that plays an essential role in promoting translocation of zinc and cadmium from roots to shoots. May control cadmium loading into xylem. In roots, transports zinc and cadmium from the apoplast to the symplast to facilitate translocation via the phloem. In nodes, functions to load zinc and cadmium to the phloem for the preferential distribution to the upper nodes and panicles. The protein is Cadmium/zinc-transporting ATPase HMA2 of Oryza sativa subsp. japonica (Rice).